We begin with the raw amino-acid sequence, 308 residues long: 4-hydroxy-3-methylbut-2-enyl diphosphate reductase 2 (308 aa).

Cys-12 is a [4Fe-4S] cluster binding site. (2E)-4-hydroxy-3-methylbut-2-enyl diphosphate-binding residues include His-41 and His-74. 2 residues coordinate dimethylallyl diphosphate: His-41 and His-74. Isopentenyl diphosphate contacts are provided by His-41 and His-74. [4Fe-4S] cluster is bound at residue Cys-96. His-124 contacts (2E)-4-hydroxy-3-methylbut-2-enyl diphosphate. His-124 contacts dimethylallyl diphosphate. His-124 provides a ligand contact to isopentenyl diphosphate. Glu-126 functions as the Proton donor in the catalytic mechanism. Thr-164 contacts (2E)-4-hydroxy-3-methylbut-2-enyl diphosphate. Residue Cys-194 coordinates [4Fe-4S] cluster. The (2E)-4-hydroxy-3-methylbut-2-enyl diphosphate site is built by Ser-222, Ser-223, Asn-224, and Ser-266. Dimethylallyl diphosphate-binding residues include Ser-222, Ser-223, Asn-224, and Ser-266. Residues Ser-222, Ser-223, Asn-224, and Ser-266 each contribute to the isopentenyl diphosphate site.

Belongs to the IspH family. The cofactor is [4Fe-4S] cluster.

It carries out the reaction isopentenyl diphosphate + 2 oxidized [2Fe-2S]-[ferredoxin] + H2O = (2E)-4-hydroxy-3-methylbut-2-enyl diphosphate + 2 reduced [2Fe-2S]-[ferredoxin] + 2 H(+). The catalysed reaction is dimethylallyl diphosphate + 2 oxidized [2Fe-2S]-[ferredoxin] + H2O = (2E)-4-hydroxy-3-methylbut-2-enyl diphosphate + 2 reduced [2Fe-2S]-[ferredoxin] + 2 H(+). Its pathway is isoprenoid biosynthesis; dimethylallyl diphosphate biosynthesis; dimethylallyl diphosphate from (2E)-4-hydroxy-3-methylbutenyl diphosphate: step 1/1. It functions in the pathway isoprenoid biosynthesis; isopentenyl diphosphate biosynthesis via DXP pathway; isopentenyl diphosphate from 1-deoxy-D-xylulose 5-phosphate: step 6/6. In terms of biological role, catalyzes the conversion of 1-hydroxy-2-methyl-2-(E)-butenyl 4-diphosphate (HMBPP) into a mixture of isopentenyl diphosphate (IPP) and dimethylallyl diphosphate (DMAPP). Acts in the terminal step of the DOXP/MEP pathway for isoprenoid precursor biosynthesis. The chain is 4-hydroxy-3-methylbut-2-enyl diphosphate reductase 2 from Bradyrhizobium diazoefficiens (strain JCM 10833 / BCRC 13528 / IAM 13628 / NBRC 14792 / USDA 110).